Consider the following 339-residue polypeptide: Ketol-acid reductoisomerase (NADP(+)) (339 aa).

The KARI N-terminal Rossmann domain maps to 1 to 182 (MRVYYDRDAD…GGGRAGIIET (182 aa)). NADP(+) is bound by residues 24–27 (YGSQ), Arg-48, Ser-51, Thr-53, and 83–86 (DELQ). Residue His-108 is part of the active site. NADP(+) is bound at residue Gly-134. In terms of domain architecture, KARI C-terminal knotted spans 183-328 (SFKEECETDL…AKLRDMMPWI (146 aa)). 4 residues coordinate Mg(2+): Asp-191, Glu-195, Glu-227, and Glu-231. Ser-252 is a binding site for substrate.

This sequence belongs to the ketol-acid reductoisomerase family. Mg(2+) is required as a cofactor.

It carries out the reaction (2R)-2,3-dihydroxy-3-methylbutanoate + NADP(+) = (2S)-2-acetolactate + NADPH + H(+). The enzyme catalyses (2R,3R)-2,3-dihydroxy-3-methylpentanoate + NADP(+) = (S)-2-ethyl-2-hydroxy-3-oxobutanoate + NADPH + H(+). It participates in amino-acid biosynthesis; L-isoleucine biosynthesis; L-isoleucine from 2-oxobutanoate: step 2/4. Its pathway is amino-acid biosynthesis; L-valine biosynthesis; L-valine from pyruvate: step 2/4. Involved in the biosynthesis of branched-chain amino acids (BCAA). Catalyzes an alkyl-migration followed by a ketol-acid reduction of (S)-2-acetolactate (S2AL) to yield (R)-2,3-dihydroxy-isovalerate. In the isomerase reaction, S2AL is rearranged via a Mg-dependent methyl migration to produce 3-hydroxy-3-methyl-2-ketobutyrate (HMKB). In the reductase reaction, this 2-ketoacid undergoes a metal-dependent reduction by NADPH to yield (R)-2,3-dihydroxy-isovalerate. In Rhodopseudomonas palustris (strain HaA2), this protein is Ketol-acid reductoisomerase (NADP(+)).